We begin with the raw amino-acid sequence, 112 residues long: M-myrmeciitoxin-Mp1 (112 aa).

A signal peptide spans 1–26 (MKLSCLLLTLTIIFVLTIVHAPNVEA). A propeptide spanning residues 27–56 (KDLADPESEAVGFADAFGEADAVGEADPNA) is cleaved from the precursor. The critical for cytotoxic activity stretch occupies residues 57-78 (GLGSVFGRLARILGRVIPKVAK). Residues 93–106 (KEAIPMAVEMAKSQ) form an igE-binding determinant region.

This sequence belongs to the formicidae venom precursor-01 superfamily. Ant pilosulin family. In terms of tissue distribution, expressed by the venom gland.

Its subcellular location is the secreted. Its function is as follows. Has strong cytotoxic and hemolytic activities. Is more potent against mononuclear leukocytes than against granulocytes. The synthesized peptide 57-76 shows a potent and broad spectrum antimicrobial activity against both Gram-positive and Gram-negative bacteria, and also against the fungus C.albicans. Adopts an alpha-helical structure. This chain is M-myrmeciitoxin-Mp1, found in Myrmecia pilosula (Jack jumper ant).